The chain runs to 282 residues: Pantothenate synthetase (282 aa).

30–37 (MGFLHDGH) is an ATP binding site. His-37 functions as the Proton donor in the catalytic mechanism. Gln-60 is a binding site for (R)-pantoate. Residue Gln-60 participates in beta-alanine binding. An ATP-binding site is contributed by 146–149 (GQKD). A (R)-pantoate-binding site is contributed by Gln-152. Residues Ile-175 and 183-186 (KSSR) each bind ATP.

Belongs to the pantothenate synthetase family. Homodimer.

The protein resides in the cytoplasm. It catalyses the reaction (R)-pantoate + beta-alanine + ATP = (R)-pantothenate + AMP + diphosphate + H(+). The protein operates within cofactor biosynthesis; (R)-pantothenate biosynthesis; (R)-pantothenate from (R)-pantoate and beta-alanine: step 1/1. Catalyzes the condensation of pantoate with beta-alanine in an ATP-dependent reaction via a pantoyl-adenylate intermediate. This is Pantothenate synthetase from Campylobacter jejuni subsp. jejuni serotype O:23/36 (strain 81-176).